Reading from the N-terminus, the 338-residue chain is Inositol 2-dehydrogenase 4 (338 aa).

It belongs to the Gfo/Idh/MocA family. As to quaternary structure, homotetramer.

The catalysed reaction is myo-inositol + NAD(+) = scyllo-inosose + NADH + H(+). Functionally, involved in the oxidation of myo-inositol (MI) to 2-keto-myo-inositol (2KMI or 2-inosose). This Saccharopolyspora erythraea (strain ATCC 11635 / DSM 40517 / JCM 4748 / NBRC 13426 / NCIMB 8594 / NRRL 2338) protein is Inositol 2-dehydrogenase 4.